Consider the following 586-residue polypeptide: Protein NRT1/ PTR FAMILY 5.3 (586 aa).

A run of 11 helical transmembrane segments spans residues 77 to 97, 100 to 120, 141 to 161, 189 to 209, 217 to 237, 334 to 354, 370 to 390, 408 to 428, 449 to 469, 492 to 512, and 538 to 558; these read WVGT…AHFG, ITFV…TLSV, ASVI…IGTG, FFNW…TVLV, WAIG…IFLL, PVLF…TLFI, IPPA…IVIY, ITLL…MIIA, AVPI…MGLA, LGTS…SILL, and NYYM…LVVI.

The protein belongs to the major facilitator superfamily. Proton-dependent oligopeptide transporter (POT/PTR) (TC 2.A.17) family. In terms of tissue distribution, expressed in roots and siliques.

The protein resides in the membrane. Peptide transporter. This is Protein NRT1/ PTR FAMILY 5.3 (NPF5.3) from Arabidopsis thaliana (Mouse-ear cress).